A 426-amino-acid chain; its full sequence is Glutamyl-tRNA reductase (426 aa).

Substrate-binding positions include 49 to 52 (TCNR), Ser-107, 112 to 114 (EPQ), and Gln-118. The Nucleophile role is filled by Cys-50. 187-192 (GAGETI) is an NADP(+) binding site.

The protein belongs to the glutamyl-tRNA reductase family. In terms of assembly, homodimer.

It carries out the reaction (S)-4-amino-5-oxopentanoate + tRNA(Glu) + NADP(+) = L-glutamyl-tRNA(Glu) + NADPH + H(+). The protein operates within porphyrin-containing compound metabolism; protoporphyrin-IX biosynthesis; 5-aminolevulinate from L-glutamyl-tRNA(Glu): step 1/2. In terms of biological role, catalyzes the NADPH-dependent reduction of glutamyl-tRNA(Glu) to glutamate 1-semialdehyde (GSA). The polypeptide is Glutamyl-tRNA reductase (Ectopseudomonas mendocina (strain ymp) (Pseudomonas mendocina)).